We begin with the raw amino-acid sequence, 302 residues long: Sulfate adenylyltransferase subunit 2 (302 aa).

It belongs to the PAPS reductase family. CysD subfamily. As to quaternary structure, heterodimer composed of CysD, the smaller subunit, and CysN.

The enzyme catalyses sulfate + ATP + H(+) = adenosine 5'-phosphosulfate + diphosphate. It participates in sulfur metabolism; hydrogen sulfide biosynthesis; sulfite from sulfate: step 1/3. In terms of biological role, with CysN forms the ATP sulfurylase (ATPS) that catalyzes the adenylation of sulfate producing adenosine 5'-phosphosulfate (APS) and diphosphate, the first enzymatic step in sulfur assimilation pathway. APS synthesis involves the formation of a high-energy phosphoric-sulfuric acid anhydride bond driven by GTP hydrolysis by CysN coupled to ATP hydrolysis by CysD. This chain is Sulfate adenylyltransferase subunit 2, found in Escherichia coli O157:H7 (strain EC4115 / EHEC).